The chain runs to 222 residues: Prolactin-2C5 (222 aa).

An N-terminal signal peptide occupies residues M1–S29. A disulfide bond links C33 and C40. N-linked (GlcNAc...) asparagine glycosylation is present at N57. Cystine bridges form between C87–C197 and C214–C222.

This sequence belongs to the somatotropin/prolactin family. Post-translationally, N-glycosylated and sialylated. As to expression, expressed in placenta (at protein level). Expressed in the tail hair follicle, with highest expression detected in the keratinocytes of the outer root sheath. Expressed in ear skin with lesser amounts in small intestine. Not detected in brain at 18 dpc, postnatal day 25 or postnatal day 55.

The protein resides in the secreted. This Mus musculus (Mouse) protein is Prolactin-2C5.